The following is a 480-amino-acid chain: Glutamate--tRNA ligase 2 (480 aa).

The short motif at 15-25 is the 'HIGH' region element; it reads PSPTGYLHVGG. A 'KMSKS' region motif is present at residues 248-252; it reads RLSKR. Lys-251 serves as a coordination point for ATP.

It belongs to the class-I aminoacyl-tRNA synthetase family. Glutamate--tRNA ligase type 1 subfamily. As to quaternary structure, monomer.

The protein resides in the cytoplasm. It carries out the reaction tRNA(Glu) + L-glutamate + ATP = L-glutamyl-tRNA(Glu) + AMP + diphosphate. Its function is as follows. Catalyzes the attachment of glutamate to tRNA(Glu) in a two-step reaction: glutamate is first activated by ATP to form Glu-AMP and then transferred to the acceptor end of tRNA(Glu). In Koribacter versatilis (strain Ellin345), this protein is Glutamate--tRNA ligase 2.